The primary structure comprises 169 residues: Large ribosomal subunit protein uL10 (169 aa).

Belongs to the universal ribosomal protein uL10 family. As to quaternary structure, part of the ribosomal stalk of the 50S ribosomal subunit. The N-terminus interacts with L11 and the large rRNA to form the base of the stalk. The C-terminus forms an elongated spine to which L12 dimers bind in a sequential fashion forming a multimeric L10(L12)X complex.

Forms part of the ribosomal stalk, playing a central role in the interaction of the ribosome with GTP-bound translation factors. This is Large ribosomal subunit protein uL10 from Rickettsia africae (strain ESF-5).